Reading from the N-terminus, the 503-residue chain is Ribose import ATP-binding protein RbsA (503 aa).

ABC transporter domains lie at 10-246 and 256-500; these read LEVR…VGRD and VEPG…TGSE. ATP is bound at residue 42–49; that stretch reads GENGAGKS.

This sequence belongs to the ABC transporter superfamily. Ribose importer (TC 3.A.1.2.1) family. In terms of assembly, the complex is composed of an ATP-binding protein (RbsA), two transmembrane proteins (RbsC) and a solute-binding protein (RbsB).

Its subcellular location is the cell membrane. It catalyses the reaction D-ribose(out) + ATP + H2O = D-ribose(in) + ADP + phosphate + H(+). Part of the ABC transporter complex RbsABC involved in ribose import. Responsible for energy coupling to the transport system. The sequence is that of Ribose import ATP-binding protein RbsA from Rhodococcus jostii (strain RHA1).